We begin with the raw amino-acid sequence, 818 residues long: Adhesion G protein-coupled receptor E5 (818 aa).

An N-terminal signal peptide occupies residues 1 to 23 (MRGVRCPGLLVVCILLSLSGAGT). Over 24–533 (QKAESKNCAK…VQDPRLELIT (510 aa)) the chain is Extracellular. The EGF-like 1 domain maps to 27–68 (ESKNCAKWCPINSKCVSNRSCVCKPGFSSEKELITNPAESCE). 12 disulfide bridges follow: cysteine 31/cysteine 41, cysteine 35/cysteine 47, cysteine 49/cysteine 67, cysteine 73/cysteine 86, cysteine 80/cysteine 95, cysteine 97/cysteine 118, cysteine 169/cysteine 182, cysteine 176/cysteine 191, cysteine 193/cysteine 212, cysteine 218/cysteine 231, cysteine 225/cysteine 240, and cysteine 242/cysteine 260. A glycan (N-linked (GlcNAc...) asparagine) is linked at asparagine 44. One can recognise an EGF-like 2; calcium-binding domain in the interval 69-119 (DINECLLPGFSCGDFAMCKNSEGSYTCVCNLGYKLLSGAESFVNESENTCQ). N-linked (GlcNAc...) asparagine glycosylation is present at asparagine 112. One can recognise an EGF-like 3; calcium-binding domain in the interval 165 to 213 (DVNECISGQNHCHQSTHCINKLGGYSCICRQGWKPVPGSPNGPVSTVCE). The region spanning 214–261 (DVDECSSGQHQCHNSTVCKNTVGSYKCHCRPGWKPTSGSLRGPDTICQ) is the EGF-like 4; calcium-binding domain. Asparagine 227 carries N-linked (GlcNAc...) asparagine glycosylation. N-linked (GlcNAc...) asparagine glycans are attached at residues asparagine 299 and asparagine 395. In terms of domain architecture, GAIN-B spans 347-525 (PFTYTSPSNT…AILMAQYHVQ (179 aa)). Phosphoserine is present on serine 425. N-linked (GlcNAc...) asparagine glycans are attached at residues asparagine 461 and asparagine 502. Cystine bridges form between cysteine 482/cysteine 507 and cysteine 499/cysteine 509. The GPS stretch occupies residues 482–525 (CAFWKAHNGNGYWDTDGCSMNGTGFCHCNHLTSFAILMAQYHVQ). A helical transmembrane segment spans residues 534–554 (KVGLLLSLICLLLCILTFLLV). Residues 555 to 562 (KPIQSSRT) are Cytoplasmic-facing. A helical membrane pass occupies residues 563–583 (MVHLHLCICLFLGSIIFLVGV). The Extracellular portion of the chain corresponds to 584–602 (ENEGGEVGLRCRLVAMMLH). The helical transmembrane segment at 603–623 (FCFLAAFCWMALEGVELYFLV) threads the bilayer. Residues 624 to 637 (VRVFQGQGLSTWQR) are Cytoplasmic-facing. A helical transmembrane segment spans residues 638–658 (CLIGYGVPLLIVAISMAVVKM). Topologically, residues 659-679 (DGYGHATYCWLDFRKQGFLWS) are extracellular. A helical transmembrane segment spans residues 680-700 (FSGPVAFIIFCNAAIFVITVW). Residues 701–723 (KLTKKFSEINPNMKKLRKARVLT) are Cytoplasmic-facing. Residues 724–744 (ITAIAQLLVLGCTWGFGLFLF) form a helical membrane-spanning segment. Residues 745–752 (NPHSTWLS) lie on the Extracellular side of the membrane. A helical membrane pass occupies residues 753-773 (YIFTLLNCLQGLFLYVMLCLL). Residues 774–818 (NKKVREEYWKWACMVTGSKYTEFNSSTTGTGTSQTRALRSSESGM) lie on the Cytoplasmic side of the membrane. Serine 798 bears the Phosphoserine mark. Residues 799–808 (STTGTGTSQT) show a composition bias toward low complexity. The interval 799 to 818 (STTGTGTSQTRALRSSESGM) is disordered. The residue at position 808 (threonine 808) is a Phosphothreonine. Over residues 809–818 (RALRSSESGM) the composition is skewed to polar residues. Phosphoserine is present on residues serine 814 and serine 816.

This sequence belongs to the G-protein coupled receptor 2 family. LN-TM7 subfamily. Forms a heterodimer, consisting of a large extracellular region (alpha subunit) non-covalently linked to a seven-transmembrane moiety (beta subunit). Interacts with complement decay-accelerating factor (DAF). The largest isoform (isoform 1) do not interact with DAF. Also interacts with chondroitin sulfate. Post-translationally, proteolytically cleaved into 2 subunits, an extracellular alpha subunit and a seven-transmembrane subunit. Although predominantly expressed by cells of the immune system, expressed ubiquitously with particularly high levels of expression in the lung and the thymus gland. In the spleen, expression is detected on most myeloid cells and variable portions of T-cells, B-cells and NK cells. In the bone marrow, expressed in nearly all myeloid cells, whereas little if any expression is found on erythroid cells.

The protein resides in the cell membrane. It is found in the secreted. The protein localises to the extracellular space. In terms of biological role, receptor potentially involved in both adhesion and signaling processes early after leukocyte activation. Plays an essential role in leukocyte migration. The protein is Adhesion G protein-coupled receptor E5 of Mus musculus (Mouse).